A 185-amino-acid polypeptide reads, in one-letter code: Ribosome-recycling factor (185 aa).

The protein belongs to the RRF family.

It is found in the cytoplasm. In terms of biological role, responsible for the release of ribosomes from messenger RNA at the termination of protein biosynthesis. May increase the efficiency of translation by recycling ribosomes from one round of translation to another. In Histophilus somni (strain 2336) (Haemophilus somnus), this protein is Ribosome-recycling factor.